A 714-amino-acid chain; its full sequence is Protein spire homolog 2 (714 aa).

The region spanning 22–203 (LSLEEVLKAY…RALFVETLEL (182 aa)) is the KIND domain. Residues 136–162 (DSEDSGCGAADEGYGGPEEEEEAEGVP) are disordered. WH2 domains lie at 248 to 262 (QLMR…LKKV), 278 to 296 (PFEM…LRKV), and 342 to 359 (LHEK…LRPV). 4 positions are modified to phosphoserine: Ser-371, Ser-440, Ser-442, and Ser-476. The disordered stretch occupies residues 453 to 516 (VASGLQSATH…SSGDRPEASM (64 aa)). Residues 486-496 (DQGTCPASVSD) are compositionally biased toward polar residues. The tract at residues 534–554 (LALTVEEVMDVRRVLVKAEME) is spir-box.

This sequence belongs to the spire family.

The protein localises to the cytoplasm. It is found in the cytoskeleton. The protein resides in the cytosol. Its subcellular location is the cell membrane. It localises to the cytoplasmic vesicle membrane. Acts as an actin nucleation factor, remains associated with the slow-growing pointed end of the new filament. Involved in intracellular vesicle transport along actin fibers, providing a novel link between actin cytoskeleton dynamics and intracellular transport. Required for asymmetric spindle positioning and asymmetric cell division during meiosis. Required for normal formation of the cleavage furrow and for polar body extrusion during female germ cell meiosis. Also acts in the nucleus: together with SPIRE1 and SPIRE2, promotes assembly of nuclear actin filaments in response to DNA damage in order to facilitate movement of chromatin and repair factors after DNA damage. The sequence is that of Protein spire homolog 2 (SPIRE2) from Homo sapiens (Human).